A 266-amino-acid polypeptide reads, in one-letter code: 3-methyl-2-oxobutanoate hydroxymethyltransferase (266 aa).

Mg(2+) contacts are provided by Asp46 and Asp85. 3-methyl-2-oxobutanoate contacts are provided by residues 46 to 47 (DS), Asp85, and Lys115. Glu117 lines the Mg(2+) pocket. Glu183 functions as the Proton acceptor in the catalytic mechanism.

Belongs to the PanB family. Homodecamer; pentamer of dimers. Mg(2+) serves as cofactor.

Its subcellular location is the cytoplasm. The catalysed reaction is 3-methyl-2-oxobutanoate + (6R)-5,10-methylene-5,6,7,8-tetrahydrofolate + H2O = 2-dehydropantoate + (6S)-5,6,7,8-tetrahydrofolate. The protein operates within cofactor biosynthesis; (R)-pantothenate biosynthesis; (R)-pantoate from 3-methyl-2-oxobutanoate: step 1/2. Functionally, catalyzes the reversible reaction in which hydroxymethyl group from 5,10-methylenetetrahydrofolate is transferred onto alpha-ketoisovalerate to form ketopantoate. This is 3-methyl-2-oxobutanoate hydroxymethyltransferase from Trichlorobacter lovleyi (strain ATCC BAA-1151 / DSM 17278 / SZ) (Geobacter lovleyi).